The following is a 612-amino-acid chain: Lipoma-preferred partner (612 aa).

Disordered stretches follow at residues 1-118 and 132-219; these read MSHP…SSLD and ECSS…SSRP. A compositionally biased stretch (polar residues) spans 26–40; the sequence is THSFGNPSISVSTQQ. Over residues 41-53 the composition is skewed to low complexity; that stretch reads PPKKFAPVVAPKP. An N6-acetyllysine modification is found at Lys-108. A phosphoserine mark is found at Ser-116 and Ser-151. Polar residues-rich tracts occupy residues 143–158 and 171–181; these read QSST…STPV and PLTATKKSTLK. Over residues 183-193 the composition is skewed to pro residues; sequence QPAPQAGPIPV. A compositionally biased stretch (polar residues) spans 209–219; that stretch reads SYTTASTSSRP. A phosphotyrosine mark is found at Tyr-244 and Tyr-301. The disordered stretch occupies residues 307–387; it reads YGGRNDSDPT…LGPSSVAPSF (81 aa). Residues 314-323 are compositionally biased toward polar residues; the sequence is DPTYGQQGHP. Lys-327 is covalently cross-linked (Glycyl lysine isopeptide (Lys-Gly) (interchain with G-Cter in SUMO1)). Thr-333 is modified (phosphothreonine). The residue at position 375 (Ser-375) is a Phosphoserine. 3 LIM zinc-binding domains span residues 414 to 473, 474 to 534, and 535 to 603; these read GRCA…INTL, EQCN…KFAP, and RCSV…RIRV.

The protein belongs to the zyxin/ajuba family. In terms of assembly, interacts with VASP, with PDZ domains of SCRIB and with ACTN1/alpha-actinin. In terms of tissue distribution, expressed in a wide variety of tissues but no or very low expression in brain and peripheral leukocytes.

It localises to the nucleus. The protein resides in the cytoplasm. Its subcellular location is the cell junction. The protein localises to the cell membrane. Its function is as follows. May play a structural role at sites of cell adhesion in maintaining cell shape and motility. In addition to these structural functions, it may also be implicated in signaling events and activation of gene transcription. May be involved in signal transduction from cell adhesion sites to the nucleus allowing successful integration of signals arising from soluble factors and cell-cell adhesion sites. Also suggested to serve as a scaffold protein upon which distinct protein complexes are assembled in the cytoplasm and in the nucleus. This Homo sapiens (Human) protein is Lipoma-preferred partner (LPP).